The primary structure comprises 281 residues: MTKHGFLLATLVLAGATLPIGPVTAATPEEEQAAFQAYFKQRFPNVPEDEFKNGTYAIDPVTRENWEAIEEFPPYENAISQGETLWNTPFADGQGYADCFPDGPAIMNHYPRWDRERGQVMTLPLALNACRTAHGETPLKYKKGPIADLLAYIAFESRGQITRVEIPQDDPRALAAYEQGKRFYFARRGQLNFACAHCHLATSGTKLRTETLSPAYGHTTHWPVYRSEWGEMGTLHRRFAGCNEQVRAKAFEPQGEEYRNLEYFLTYMNNGLELNGPGARK.

Positions 1-25 are cleaved as a signal peptide; the sequence is MTKHGFLLATLVLAGATLPIGPVTA. Cysteine 99 and cysteine 130 form a disulfide bridge. Residues 175–281 enclose the Cytochrome c domain; the sequence is AAYEQGKRFY…LELNGPGARK (107 aa). 2 residues coordinate heme: cysteine 195 and histidine 199. Arginine 238 contributes to the substrate binding site. Residue cysteine 242 coordinates heme. The active-site Cysteine persulfide intermediate is the cysteine 242.

The protein belongs to the SoxA family. In terms of assembly, heterodimer of SoxA and SoxX. Heme is required as a cofactor. Post-translationally, cysteine persulfide at Cys-242.

The protein resides in the periplasm. The catalysed reaction is L-cysteinyl-[SoxY protein] + thiosulfate + 2 Fe(III)-[cytochrome c] = S-sulfosulfanyl-L-cysteinyl-[SoxY protein] + 2 Fe(II)-[cytochrome c] + 2 H(+). The enzyme catalyses S-sulfanyl-L-cysteinyl-[SoxY protein] + thiosulfate + 2 Fe(III)-[cytochrome c] = S-(2-sulfodisulfanyl)-L-cysteinyl-[SoxY protein] + 2 Fe(II)-[cytochrome c] + 2 H(+). In terms of biological role, C-type monoheme cytochrome, which is part of the SoxAX cytochrome complex involved in sulfur oxidation. The SoxAX complex catalyzes the formation of a heterodisulfide bond between the conserved cysteine residue on a sulfur carrier SoxYZ complex subunit SoxY and thiosulfate or other inorganic sulfur substrates. This leads to the intermediary formation of conspicuous sulfur globules inside of the cells. This Allochromatium vinosum (Chromatium vinosum) protein is L-cysteine S-thiosulfotransferase subunit SoxA.